The primary structure comprises 213 residues: ATP synthase peripheral stalk subunit OSCP, mitochondrial (213 aa).

The N-terminal 23 residues, 1–23 (MAAPAVSGFSRQVRCFSTSVVRP), are a transit peptide targeting the mitochondrion. An SIFI-degron motif is present at residues 5-23 (AVSGFSRQVRCFSTSVVRP). N6-acetyllysine occurs at positions 54, 60, 70, and 73. The residue at position 90 (Lys-90) is an N6-succinyllysine. Residues Lys-100 and Lys-158 each carry the N6-acetyllysine; alternate modification. N6-succinyllysine; alternate occurs at positions 100 and 158. 3 positions are modified to N6-acetyllysine: Lys-172, Lys-176, and Lys-192. An N6-succinyllysine modification is found at Lys-199.

This sequence belongs to the ATPase delta chain family. As to quaternary structure, component of the ATP synthase complex composed at least of ATP5F1A/subunit alpha, ATP5F1B/subunit beta, ATP5MC1/subunit c (homooctomer), MT-ATP6/subunit a, MT-ATP8/subunit 8, ATP5ME/subunit e, ATP5MF/subunit f, ATP5MG/subunit g, ATP5MK/subunit k, ATP5MJ/subunit j, ATP5F1C/subunit gamma, ATP5F1D/subunit delta, ATP5F1E/subunit epsilon, ATP5PF/subunit F6, ATP5PB/subunit b, ATP5PD/subunit d, ATP5PO/subunit OSCP. ATP synthase complex consists of a soluble F(1) head domain (subunits alpha(3) and beta(3)) - the catalytic core - and a membrane F(0) domain - the membrane proton channel (subunits c, a, 8, e, f, g, k and j). These two domains are linked by a central stalk (subunits gamma, delta, and epsilon) rotating inside the F1 region and a stationary peripheral stalk (subunits F6, b, d, and OSCP). In terms of processing, in response to mitochondrial stress, the precursor protein is ubiquitinated by the SIFI complex in the cytoplasm before mitochondrial import, leading to its degradation. Within the SIFI complex, UBR4 initiates ubiquitin chain that are further elongated or branched by KCMF1.

Its subcellular location is the mitochondrion. It is found in the mitochondrion inner membrane. Subunit OSCP, of the mitochondrial membrane ATP synthase complex (F(1)F(0) ATP synthase or Complex V) that produces ATP from ADP in the presence of a proton gradient across the membrane which is generated by electron transport complexes of the respiratory chain. ATP synthase complex consist of a soluble F(1) head domain - the catalytic core - and a membrane F(1) domain - the membrane proton channel. These two domains are linked by a central stalk rotating inside the F(1) region and a stationary peripheral stalk. During catalysis, ATP synthesis in the catalytic domain of F(1) is coupled via a rotary mechanism of the central stalk subunits to proton translocation. In vivo, can only synthesize ATP although its ATP hydrolase activity can be activated artificially in vitro. Part of the complex F(0) domain. Part of the complex F(0) domain and the peripheric stalk, which acts as a stator to hold the catalytic alpha(3)beta(3) subcomplex and subunit a/ATP6 static relative to the rotary elements. The sequence is that of ATP synthase peripheral stalk subunit OSCP, mitochondrial from Rhinolophus ferrumequinum (Greater horseshoe bat).